Here is a 97-residue protein sequence, read N- to C-terminus: Aspartyl/glutamyl-tRNA(Asn/Gln) amidotransferase subunit C (97 aa).

This sequence belongs to the GatC family. In terms of assembly, heterotrimer of A, B and C subunits.

It catalyses the reaction L-glutamyl-tRNA(Gln) + L-glutamine + ATP + H2O = L-glutaminyl-tRNA(Gln) + L-glutamate + ADP + phosphate + H(+). It carries out the reaction L-aspartyl-tRNA(Asn) + L-glutamine + ATP + H2O = L-asparaginyl-tRNA(Asn) + L-glutamate + ADP + phosphate + 2 H(+). Functionally, allows the formation of correctly charged Asn-tRNA(Asn) or Gln-tRNA(Gln) through the transamidation of misacylated Asp-tRNA(Asn) or Glu-tRNA(Gln) in organisms which lack either or both of asparaginyl-tRNA or glutaminyl-tRNA synthetases. The reaction takes place in the presence of glutamine and ATP through an activated phospho-Asp-tRNA(Asn) or phospho-Glu-tRNA(Gln). The protein is Aspartyl/glutamyl-tRNA(Asn/Gln) amidotransferase subunit C of Cyanothece sp. (strain PCC 7425 / ATCC 29141).